Reading from the N-terminus, the 250-residue chain is Archaeal flagellar motor scaffold protein FlaX (250 aa).

Residues 1–9 (MAIQDLLQS) are Extracellular-facing. Residues 10–30 (SLFIILIGVGIPIAAFLEILF) traverse the membrane as a helical segment. Residues 31–250 (RVILPKTKRV…MILEGGGVNG (220 aa)) are Cytoplasmic-facing. Residues 42 to 61 (TQQSPQNISQEQRFPTQQKP) are compositionally biased toward polar residues. Residues 42–72 (TQQSPQNISQEQRFPTQQKPANDETSKYSSD) form a disordered region. The span at 62–72 (ANDETSKYSSD) shows a compositional bias: basic and acidic residues.

The S.acidocaldarius archaellum assembly machinery and its filament consist of seven proteins (FlaB, FlaF, FlaG, FlaH, FlaI, FlaJ and FlaX). FlaX assembles into ring-shaped oligomers. Interacts directly with FlaH and the motor ATPase FlaI.

Its subcellular location is the archaeal flagellum. It localises to the cell membrane. The presence of the flagellar core components FlaH, FlaI and FlaJ seems to be crucial for the stability of FlaX. In terms of biological role, component of the archaellum. FlaX, FlaH and FlaI form the core cytoplasmic motor complex of the crenarchaeal archaellum. FlaX forms a ring that may act as a membrane-bound cytoplasmic scaffold that guides the assembly of the archaellum motor complex. Is essential for archaellum assembly. The polypeptide is Archaeal flagellar motor scaffold protein FlaX (Sulfolobus acidocaldarius (strain ATCC 33909 / DSM 639 / JCM 8929 / NBRC 15157 / NCIMB 11770)).